Reading from the N-terminus, the 449-residue chain is MSHITFDYSKVLESFAGQHEIDFLQGQVTEADKLLREGTGPGSDFLGWLDLPENYDKDEFARILTAAEKIKSDSEVLVVIGIGGSYLGAKAAIDFLNHHFANLQTAKERKAPQILYAGNSISSTYLADLVEYVQDKEFSVNVISKSGTTTEPAIAFRVFKELLVKKYGQEEANKRIYATTDKVKGAVKVEADANNWETFVVPDNVGGRFSVLTAVGLLPIAASGADITALMEGANAARKDLSSDKISENIAYQYAAVRNVLYRKGYITEILANYEPSLQYFGEWWKQLAGESEGKDQKGIYPTSANFSTDLHSLGQFIQEGYRNLFETVIRVDKPRKNVIIPELAEDLDGLGYLQGKDVDFVNKKATDGVLLAHTDGGVPNMFVTLPAQDEFTLGYTIYFFELAIAVSGYMNAVNPFDQPGVEAYKRNMFALLGKPGFEELSAELNARL.

Catalysis depends on E291, which acts as the Proton donor. Residues H312 and K426 contribute to the active site.

Belongs to the GPI family.

It is found in the cytoplasm. The catalysed reaction is alpha-D-glucose 6-phosphate = beta-D-fructose 6-phosphate. It functions in the pathway carbohydrate biosynthesis; gluconeogenesis. It participates in carbohydrate degradation; glycolysis; D-glyceraldehyde 3-phosphate and glycerone phosphate from D-glucose: step 2/4. Functionally, catalyzes the reversible isomerization of glucose-6-phosphate to fructose-6-phosphate. The polypeptide is Glucose-6-phosphate isomerase (Streptococcus pyogenes serotype M4 (strain MGAS10750)).